A 369-amino-acid polypeptide reads, in one-letter code: Nuclear pore complex-interacting protein family member A2 (369 aa).

The disordered stretch occupies residues 325–346; sequence KTPPECLLTPLPPSAPPSADDN.

The protein belongs to the NPIP family.

This Homo sapiens (Human) protein is Nuclear pore complex-interacting protein family member A2 (NPIPA2).